The following is a 239-amino-acid chain: Serine protease SplF (239 aa).

Residues 1–36 (MNKNIIIKSIAALTILTSITGVGTTMVEGIQQTAKA) form the signal peptide. Residues His-75, Asp-114, and Ser-192 each act as charge relay system in the active site.

Belongs to the peptidase S1B family.

The protein resides in the secreted. In Staphylococcus aureus (strain NCTC 8325 / PS 47), this protein is Serine protease SplF (splF).